Here is a 527-residue protein sequence, read N- to C-terminus: Peptide chain release factor 3 (527 aa).

Residues 9–277 (AKRRTFAIIS…AVVDWAPLPL (269 aa)) form the tr-type G domain. Residues 18–25 (SHPDAGKT), 86–90 (DTPGH), and 140–143 (NKLD) contribute to the GTP site.

Belongs to the TRAFAC class translation factor GTPase superfamily. Classic translation factor GTPase family. PrfC subfamily.

The protein resides in the cytoplasm. Increases the formation of ribosomal termination complexes and stimulates activities of RF-1 and RF-2. It binds guanine nucleotides and has strong preference for UGA stop codons. It may interact directly with the ribosome. The stimulation of RF-1 and RF-2 is significantly reduced by GTP and GDP, but not by GMP. In Pseudomonas fluorescens (strain ATCC BAA-477 / NRRL B-23932 / Pf-5), this protein is Peptide chain release factor 3.